The primary structure comprises 196 residues: NAD(P)H-quinone oxidoreductase subunit I (196 aa).

2 consecutive 4Fe-4S ferredoxin-type domains span residues G54–V83 and K94–E123. [4Fe-4S] cluster is bound by residues C63, C66, C69, C73, C103, C106, C109, and C113. The interval P174–N196 is disordered.

This sequence belongs to the complex I 23 kDa subunit family. In terms of assembly, NDH-1 is composed of at least 11 different subunits. [4Fe-4S] cluster is required as a cofactor.

Its subcellular location is the cellular thylakoid membrane. It carries out the reaction a plastoquinone + NADH + (n+1) H(+)(in) = a plastoquinol + NAD(+) + n H(+)(out). The catalysed reaction is a plastoquinone + NADPH + (n+1) H(+)(in) = a plastoquinol + NADP(+) + n H(+)(out). Its function is as follows. NDH-1 shuttles electrons from an unknown electron donor, via FMN and iron-sulfur (Fe-S) centers, to quinones in the respiratory and/or the photosynthetic chain. The immediate electron acceptor for the enzyme in this species is believed to be plastoquinone. Couples the redox reaction to proton translocation, and thus conserves the redox energy in a proton gradient. This chain is NAD(P)H-quinone oxidoreductase subunit I, found in Thermosynechococcus vestitus (strain NIES-2133 / IAM M-273 / BP-1).